A 744-amino-acid polypeptide reads, in one-letter code: Cytosolic neutral trehalase (744 aa).

5 residues coordinate Ca(2+): D99, D101, N103, Q105, and D110. Substrate is bound by residues R286, 293–294 (WD), N330, 339–341 (RSQ), E406, R455, and G458. Active-site proton donor/acceptor residues include D460 and E665.

The protein belongs to the glycosyl hydrolase 37 family. Requires Ca(2+) as cofactor.

It localises to the cytoplasm. The enzyme catalyses alpha,alpha-trehalose + H2O = alpha-D-glucose + beta-D-glucose. It participates in carbohydrate degradation. In terms of biological role, hydrolyzes intracellular trehalose to glucose. This Neurospora crassa (strain ATCC 24698 / 74-OR23-1A / CBS 708.71 / DSM 1257 / FGSC 987) protein is Cytosolic neutral trehalase.